The following is a 432-amino-acid chain: MRLSKEFIGLGIITASLIFGSSLPDIYKGIVILIVAGCLWFFELLPLPVTSLAIPIMAVFLGIFNLKEALTYFAHPIIFLFLGGFMLAQALKNHNLDKFIAYKLLNYGKDFKTTCFLMFLSAYFLSMWISNTSATLILLPIALGLLHKKTGKLRDFLLLGVAYSASIGGIATIIGSPPNAIASSYLDYGFFSWFKVGFPISLLLFLICTLTLYIYFKKWIPKEDIAIQARMELSRNAYKLLVIFVLIASLWIISDYLSEIFNVQYFDSVIAIFAIILLFVFNLVEVNDFKKIDWGTLILFGGALCLGGVIVKSGANTFLSEKLIAILGNLTPIVLLFLVVTITIILTNFISNTGLTGIIVPILFGVSLGIPKEILILAVGMSASCSFILPVGTPPNAIVYSEGVKKEEMMKIGMILSILSAAVITLYSILYL.

Helical transmembrane passes span 7–27 (FIGLGIITASLIFGSSLPDIY), 29–49 (GIVILIVAGCLWFFELLPLPV), 68–88 (EALTYFAHPIIFLFLGGFMLA), 124–144 (FLSMWISNTSATLILLPIALG), 156–176 (FLLLGVAYSASIGGIATIIGS), 196–216 (VGFPISLLLFLICTLTLYIYF), 241–261 (LVIFVLIASLWIISDYLSEIF), 266–286 (FDSVIAIFAIILLFVFNLVEV), 291–311 (KIDWGTLILFGGALCLGGVIV), 326–346 (ILGNLTPIVLLFLVVTITIIL), 358–378 (IIVPILFGVSLGIPKEILILA), 379–399 (VGMSASCSFILPVGTPPNAIV), and 412–432 (IGMILSILSAAVITLYSILYL).

This sequence belongs to the CitM (TC 2.A.11) transporter family.

Its subcellular location is the cell membrane. This is an uncharacterized protein from Methanocaldococcus jannaschii (strain ATCC 43067 / DSM 2661 / JAL-1 / JCM 10045 / NBRC 100440) (Methanococcus jannaschii).